A 973-amino-acid chain; its full sequence is Serine/threonine-protein kinase atg1 (973 aa).

Residues 23 to 328 enclose the Protein kinase domain; the sequence is YTRLDEIGRG…FPDFFQNGVI (306 aa). Residues 29–37 and Lys-52 contribute to the ATP site; that span reads IGRGSFATV. The active-site Proton acceptor is the Asp-166. 4 disordered regions span residues 338–446, 460–482, 523–587, and 949–973; these read DDLP…PGRQ, RQKGRNTFSEGSPQIDRQADKLR, GNIS…QSPT, and PTPSANVPSKMASSNPVSVGATPPK. A compositionally biased stretch (polar residues) spans 387–407; that stretch reads GLTQRPPSQNQRFGTPQTTTP. A compositionally biased stretch (polar residues) spans 523–537; that stretch reads GNISRGAQTGALSRR. Over residues 566–582 the composition is skewed to basic and acidic residues; it reads SRADSMHNRQGSYERRY. Polar residues predominate over residues 951-965; the sequence is PSANVPSKMASSNPV.

The protein belongs to the protein kinase superfamily. Ser/Thr protein kinase family. APG1/unc-51/ULK1 subfamily. Homodimer. Forms a ternary complex with ATG13 and ATG17.

Its subcellular location is the cytoplasm. It localises to the preautophagosomal structure membrane. The catalysed reaction is L-seryl-[protein] + ATP = O-phospho-L-seryl-[protein] + ADP + H(+). It catalyses the reaction L-threonyl-[protein] + ATP = O-phospho-L-threonyl-[protein] + ADP + H(+). Serine/threonine protein kinase involved in the cytoplasm to vacuole transport (Cvt) and found to be essential in autophagy, where it is required for the formation of autophagosomes. Involved in the clearance of protein aggregates which cannot be efficiently cleared by the proteasome. Required for selective autophagic degradation of the nucleus (nucleophagy) as well as for mitophagy which contributes to regulate mitochondrial quantity and quality by eliminating the mitochondria to a basal level to fulfill cellular energy requirements and preventing excess ROS production. Also involved in endoplasmic reticulum-specific autophagic process, in selective removal of ER-associated degradation (ERAD) substrates. Plays a key role in ATG9 and ATG23 cycling through the pre-autophagosomal structure and is necessary to promote ATG18 binding to ATG9 through phosphorylation of ATG9. Catalyzes phosphorylation of ATG4, decreasing the interaction between ATG4 and ATG8 and impairing deconjugation of PE-conjugated forms of ATG8. In Aspergillus fumigatus (strain ATCC MYA-4609 / CBS 101355 / FGSC A1100 / Af293) (Neosartorya fumigata), this protein is Serine/threonine-protein kinase atg1.